A 337-amino-acid polypeptide reads, in one-letter code: Holliday junction branch migration complex subunit RuvB (337 aa).

The segment at 4-184 (ADRLIAPAAI…FGIVQRLEFY (181 aa)) is large ATPase domain (RuvB-L). Residues Ile-23, Arg-24, Gly-65, Lys-68, Thr-69, Thr-70, 131 to 133 (EDY), Arg-174, Tyr-184, and Arg-221 contribute to the ATP site. Residue Thr-69 participates in Mg(2+) binding. The segment at 185 to 255 (KVEDLAHIVG…IAAQALDMLD (71 aa)) is small ATPAse domain (RuvB-S). The segment at 258-337 (NAGFDYMDRK…FGLTTPERQG (80 aa)) is head domain (RuvB-H). The DNA site is built by Arg-313 and Arg-318.

This sequence belongs to the RuvB family. As to quaternary structure, homohexamer. Forms an RuvA(8)-RuvB(12)-Holliday junction (HJ) complex. HJ DNA is sandwiched between 2 RuvA tetramers; dsDNA enters through RuvA and exits via RuvB. An RuvB hexamer assembles on each DNA strand where it exits the tetramer. Each RuvB hexamer is contacted by two RuvA subunits (via domain III) on 2 adjacent RuvB subunits; this complex drives branch migration. In the full resolvosome a probable DNA-RuvA(4)-RuvB(12)-RuvC(2) complex forms which resolves the HJ.

The protein resides in the cytoplasm. The enzyme catalyses ATP + H2O = ADP + phosphate + H(+). Functionally, the RuvA-RuvB-RuvC complex processes Holliday junction (HJ) DNA during genetic recombination and DNA repair, while the RuvA-RuvB complex plays an important role in the rescue of blocked DNA replication forks via replication fork reversal (RFR). RuvA specifically binds to HJ cruciform DNA, conferring on it an open structure. The RuvB hexamer acts as an ATP-dependent pump, pulling dsDNA into and through the RuvAB complex. RuvB forms 2 homohexamers on either side of HJ DNA bound by 1 or 2 RuvA tetramers; 4 subunits per hexamer contact DNA at a time. Coordinated motions by a converter formed by DNA-disengaged RuvB subunits stimulates ATP hydrolysis and nucleotide exchange. Immobilization of the converter enables RuvB to convert the ATP-contained energy into a lever motion, pulling 2 nucleotides of DNA out of the RuvA tetramer per ATP hydrolyzed, thus driving DNA branch migration. The RuvB motors rotate together with the DNA substrate, which together with the progressing nucleotide cycle form the mechanistic basis for DNA recombination by continuous HJ branch migration. Branch migration allows RuvC to scan DNA until it finds its consensus sequence, where it cleaves and resolves cruciform DNA. This chain is Holliday junction branch migration complex subunit RuvB, found in Tolumonas auensis (strain DSM 9187 / NBRC 110442 / TA 4).